The chain runs to 107 residues: Bombesin (107 aa).

The signal sequence occupies residues 1–26 (MSAIPLNRILPLGFLLIFSFISLSSC). The propeptide occupies 27 to 41 (MEFVEDPNNQGGLNL). The residue at position 42 (Gln-42) is a Pyrrolidone carboxylic acid. Met-55 is modified (methionine amide). The propeptide occupies 56–107 (GKKSLQDTDFEEMESFAKRNVENMKAESERELRHAQLVVRNILEQYLKNMQN).

Expressed by the skin glands.

It localises to the secreted. Functionally, stimulates smooth muscle contraction. Role in induction of hypothermia, stimulation of DNA replication and release of many gastrointestinal hormones. Possesses insulin-releasing activity. The sequence is that of Bombesin from Bombina variegata (Yellow-bellied toad).